The primary structure comprises 320 residues: Porphobilinogen deaminase (320 aa).

Position 248 is an S-(dipyrrolylmethanemethyl)cysteine (Cys248).

It belongs to the HMBS family. As to quaternary structure, monomer. It depends on dipyrromethane as a cofactor.

The enzyme catalyses 4 porphobilinogen + H2O = hydroxymethylbilane + 4 NH4(+). It participates in porphyrin-containing compound metabolism; protoporphyrin-IX biosynthesis; coproporphyrinogen-III from 5-aminolevulinate: step 2/4. The protein operates within porphyrin-containing compound metabolism; chlorophyll biosynthesis. In terms of biological role, tetrapolymerization of the monopyrrole PBG into the hydroxymethylbilane pre-uroporphyrinogen in several discrete steps. This is Porphobilinogen deaminase from Synechococcus elongatus (strain ATCC 33912 / PCC 7942 / FACHB-805) (Anacystis nidulans R2).